We begin with the raw amino-acid sequence, 278 residues long: Phosphatidylglycerol--prolipoprotein diacylglyceryl transferase (278 aa).

4 helical membrane passes run 18–38, 55–75, 90–110, and 115–135; these read IQVH…TILA, LILW…VIFE, WDGG…VYLF, and WIPV…AQGI. Arginine 137 contacts a 1,2-diacyl-sn-glycero-3-phospho-(1'-sn-glycerol). The next 3 helical transmembrane spans lie at 177–197, 207–227, and 237–257; these read QPTF…LMSL, GEVF…VEGM, and IRVS…ILVF.

It belongs to the Lgt family.

Its subcellular location is the cell membrane. It carries out the reaction L-cysteinyl-[prolipoprotein] + a 1,2-diacyl-sn-glycero-3-phospho-(1'-sn-glycerol) = an S-1,2-diacyl-sn-glyceryl-L-cysteinyl-[prolipoprotein] + sn-glycerol 1-phosphate + H(+). The protein operates within protein modification; lipoprotein biosynthesis (diacylglyceryl transfer). Functionally, catalyzes the transfer of the diacylglyceryl group from phosphatidylglycerol to the sulfhydryl group of the N-terminal cysteine of a prolipoprotein, the first step in the formation of mature lipoproteins. The protein is Phosphatidylglycerol--prolipoprotein diacylglyceryl transferase of Pediococcus pentosaceus (strain ATCC 25745 / CCUG 21536 / LMG 10740 / 183-1w).